We begin with the raw amino-acid sequence, 189 residues long: CDP-archaeol synthase (189 aa).

Transmembrane regions (helical) follow at residues 6–26, 71–91, 96–116, 125–145, and 162–184; these read VAIA…AVLA, GVVL…TVGV, IAAA…ASFL, GAAF…ALTA, and VAIF…AFGL.

Belongs to the CDP-archaeol synthase family. It depends on Mg(2+) as a cofactor.

It is found in the cell membrane. The catalysed reaction is 2,3-bis-O-(geranylgeranyl)-sn-glycerol 1-phosphate + CTP + H(+) = CDP-2,3-bis-O-(geranylgeranyl)-sn-glycerol + diphosphate. It functions in the pathway membrane lipid metabolism; glycerophospholipid metabolism. Catalyzes the formation of CDP-2,3-bis-(O-geranylgeranyl)-sn-glycerol (CDP-archaeol) from 2,3-bis-(O-geranylgeranyl)-sn-glycerol 1-phosphate (DGGGP) and CTP. This reaction is the third ether-bond-formation step in the biosynthesis of archaeal membrane lipids. The polypeptide is CDP-archaeol synthase (Natronomonas pharaonis (strain ATCC 35678 / DSM 2160 / CIP 103997 / JCM 8858 / NBRC 14720 / NCIMB 2260 / Gabara) (Halobacterium pharaonis)).